The primary structure comprises 396 residues: Flap endonuclease 1 (396 aa).

Residues 1 to 104 (MGIKHLYQLI…GELAKRFQRK (104 aa)) form an N-domain region. Aspartate 34 contacts Mg(2+). Residues arginine 47 and arginine 70 each coordinate DNA. Residues aspartate 86, glutamate 158, glutamate 160, aspartate 179, and aspartate 181 each coordinate Mg(2+). Positions 122-255 (DVEKFSRRTV…STALKLIRDH (134 aa)) are I-domain. Residue glutamate 158 participates in DNA binding. DNA contacts are provided by glycine 233 and aspartate 235. Aspartate 235 serves as a coordination point for Mg(2+). The interval 338-396 (MKSAQQSRLEGFFKPVERTPEEKASLKRKADEKLSEKKKKQKEEAKAKKQAKSKPRTAG) is disordered. An interaction with PCNA region spans residues 342 to 350 (QQSRLEGFF). Positions 352–384 (PVERTPEEKASLKRKADEKLSEKKKKQKEEAKA) are enriched in basic and acidic residues. Basic residues predominate over residues 385–396 (KKQAKSKPRTAG).

The protein belongs to the XPG/RAD2 endonuclease family. FEN1 subfamily. In terms of assembly, interacts with PCNA. Three molecules of FEN1 bind to one PCNA trimer with each molecule binding to one PCNA monomer. PCNA stimulates the nuclease activity without altering cleavage specificity. Mg(2+) serves as cofactor. Phosphorylated. Phosphorylation upon DNA damage induces relocalization to the nuclear plasma.

It localises to the nucleus. Its subcellular location is the nucleolus. The protein localises to the nucleoplasm. The protein resides in the mitochondrion. Structure-specific nuclease with 5'-flap endonuclease and 5'-3' exonuclease activities involved in DNA replication and repair. During DNA replication, cleaves the 5'-overhanging flap structure that is generated by displacement synthesis when DNA polymerase encounters the 5'-end of a downstream Okazaki fragment. It enters the flap from the 5'-end and then tracks to cleave the flap base, leaving a nick for ligation. Also involved in the long patch base excision repair (LP-BER) pathway, by cleaving within the apurinic/apyrimidinic (AP) site-terminated flap. Acts as a genome stabilization factor that prevents flaps from equilibrating into structures that lead to duplications and deletions. Also possesses 5'-3' exonuclease activity on nicked or gapped double-stranded DNA, and exhibits RNase H activity. Also involved in replication and repair of rDNA and in repairing mitochondrial DNA. This chain is Flap endonuclease 1, found in Phaeosphaeria nodorum (strain SN15 / ATCC MYA-4574 / FGSC 10173) (Glume blotch fungus).